The primary structure comprises 299 residues: MEEPSRPSSDTLTTVESSSGEPDKEVASPDGAAPATFSSVEEPSPNPTAMPPVWDHGGPLQQVAYPASDSCQTGSTNTGVGTNEDLRLPRRRPPPGKQIPCSSPGCCLSFPSVRDLAQHLRTHCPPTQSLEGKLFRCSALSCTESFPSMQELVAHGKLHYKPNRYFKCENCLLRFRTHRSLFKHLHVCIDHGQNPAPPPPPALDKEPPVPERPPESDPSSSLGLPFPLLEPFTSAPTGPFLPYLNPAPFGLSPPRLRPFLAATPGPPASSTAIWKKSQGATSSPRRPQGGSDAPSGACR.

2 stretches are compositionally biased toward polar residues: residues 1–20 (MEEP…SSSG) and 69–81 (DSCQ…TGVG). A disordered region spans residues 1 to 98 (MEEPSRPSSD…PRRRPPPGKQ (98 aa)). C2H2-type zinc fingers lie at residues 99-123 (IPCS…LRTH) and 135-159 (FRCS…GKLH). The C2H2-type 3; degenerate zinc finger occupies 166-190 (FKCENCLLRFRTHRSLFKHLHVCID). Disordered stretches follow at residues 193-228 (QNPA…PFPL) and 254-299 (PRLR…GACR). The segment covering 203–215 (LDKEPPVPERPPE) has biased composition (basic and acidic residues). The segment covering 217–228 (DPSSSLGLPFPL) has biased composition (low complexity).

This sequence belongs to the krueppel C2H2-type zinc-finger protein family.

It is found in the nucleus. Its function is as follows. May be involved in transcriptional regulation. This Mus musculus (Mouse) protein is Zinc finger protein 414 (Znf414).